A 972-amino-acid polypeptide reads, in one-letter code: 116 kDa U5 small nuclear ribonucleoprotein component (972 aa).

At Met-1 the chain carries N-acetylmethionine. The tract at residues 1–54 is disordered; it reads MDTDLYDEFGNYIGPELDSDEDDDELGRETKDLDEMDDDDDDDDVGDHDDDHPG. 2 stretches are compositionally biased toward acidic residues: residues 17–26 and 34–48; these read LDSDEDDDEL and DEMD…VGDH. Phosphoserine is present on Ser-19. A Glycyl lysine isopeptide (Lys-Gly) (interchain with G-Cter in SUMO1); alternate cross-link involves residue Lys-64. A Glycyl lysine isopeptide (Lys-Gly) (interchain with G-Cter in SUMO2); alternate cross-link involves residue Lys-64. A Phosphothreonine modification is found at Thr-86. The region spanning 127 to 409 is the tr-type G domain; the sequence is ELIRNVTLCG…GIHLTKEELK (283 aa). Residues 136–143, 204–208, and 258–261 each bind GTP; these read GHLHHGKT, DTPGH, and NKID.

Belongs to the TRAFAC class translation factor GTPase superfamily. Classic translation factor GTPase family. EF-G/EF-2 subfamily. In terms of assembly, component of the U5 snRNP and the U4/U6-U5 tri-snRNP complex, a building block of the spliceosome. The U4/U6-U5 tri-snRNP complex is composed of the U4, U6 and U5 snRNAs and at least PRPF3, PRPF4, PRPF6, PRPF8, PRPF31, SNRNP200, TXNL4A, SNRNP40, DDX23, CD2BP2, PPIH, SNU13, EFTUD2, SART1 and USP39. Component of the pre-catalytic, catalytic and post-catalytic spliceosome complexes. Component of the minor spliceosome, which splices U12-type introns. Within this complex, interacts with CRIPT. Interacts with ERBB4 and PRPF8. Interacts with PIH1D1. Interacts with RPAP3 and URI1 in a ZNHIT2-dependent manner. Interacts with NRDE2. Interacts with FAM50A. Interacts with UBL5.

It localises to the nucleus. Required for pre-mRNA splicing as component of the spliceosome, including pre-catalytic, catalytic and post-catalytic spliceosomal complexes. Component of the U5 snRNP and the U4/U6-U5 tri-snRNP complex, a building block of the spliceosome. As a component of the minor spliceosome, involved in the splicing of U12-type introns in pre-mRNAs. The protein is 116 kDa U5 small nuclear ribonucleoprotein component (EFTUD2) of Homo sapiens (Human).